Consider the following 468-residue polypeptide: Secreted triacylglycerol lipase LIP2 (468 aa).

The first 22 residues, 1 to 22, serve as a signal peptide directing secretion; the sequence is MFGFRLFILAAVALAYIQCAAA. C125 and C295 are oxidised to a cystine. The active-site Nucleophile is the S209. 3 N-linked (GlcNAc...) asparagine glycosylation sites follow: N242, N252, and N279. Residues D355 and H389 contribute to the active site.

Belongs to the AB hydrolase superfamily. Lipase family. Class Lip subfamily.

It localises to the secreted. It carries out the reaction a triacylglycerol + H2O = a diacylglycerol + a fatty acid + H(+). The catalysed reaction is a monoacylglycerol + H2O = glycerol + a fatty acid + H(+). The enzyme catalyses a diacylglycerol + H2O = a monoacylglycerol + a fatty acid + H(+). Secreted lipase that hydrolyzes acylglycerol lipids such as triacylglycerols and consequently releases free fatty acid. Due to an absence of fatty acid synthase genes in Malassezia species, secretory lipases are essential for the yeast to generate free fatty acids from degradation of sebum and assimilate them as lipid sources for growth. Plays important roles not only in lipid metabolism but also in the immune response of host cells and pathogenesis. The sequence is that of Secreted triacylglycerol lipase LIP2 from Malassezia furfur (Pityriasis versicolor infection agent).